The sequence spans 107 residues: uncharacterized protein (107 aa).

The tract at residues 86-107 (KRAETARLPAATPQKRTGPARG) is disordered.

This is an uncharacterized protein from Saccharomyces cerevisiae (strain ATCC 204508 / S288c) (Baker's yeast).